Consider the following 143-residue polypeptide: Spliceosomal protein DIB1 (143 aa).

This sequence belongs to the DIM1 family. As to quaternary structure, component of the 25S [U4/U6.U5] tri-snRNP.

It localises to the nucleus. In terms of biological role, essential role in pre-mRNA splicing. Also essential for entry into mitosis (G2/M progression) as well as for chromosome segregation during mitosis. The chain is Spliceosomal protein DIB1 (DIB1) from Eremothecium gossypii (strain ATCC 10895 / CBS 109.51 / FGSC 9923 / NRRL Y-1056) (Yeast).